A 391-amino-acid chain; its full sequence is GTPase Obg (391 aa).

Positions 1–159 (MKFLDQAKIF…IWVWLRLKLI (159 aa)) constitute an Obg domain. Residues 160–327 (ADAGLIGLPN…VLRVMATHVD (168 aa)) form the OBG-type G domain. GTP-binding positions include 166-173 (GLPNAGKS), 191-195 (FTTLH), 212-215 (DIPG), 279-282 (SKID), and 308-310 (SAI). 2 residues coordinate Mg(2+): S173 and T193. The disordered stretch occupies residues 352 to 391 (TGIDHGYNRPSAVVDWEDAPFDDDDDDDGDESGDKGQWTR). Over residues 366 to 382 (DWEDAPFDDDDDDDGDE) the composition is skewed to acidic residues.

It belongs to the TRAFAC class OBG-HflX-like GTPase superfamily. OBG GTPase family. In terms of assembly, monomer. Requires Mg(2+) as cofactor.

It is found in the cytoplasm. Functionally, an essential GTPase which binds GTP, GDP and possibly (p)ppGpp with moderate affinity, with high nucleotide exchange rates and a fairly low GTP hydrolysis rate. Plays a role in control of the cell cycle, stress response, ribosome biogenesis and in those bacteria that undergo differentiation, in morphogenesis control. This Rhodospirillum rubrum (strain ATCC 11170 / ATH 1.1.1 / DSM 467 / LMG 4362 / NCIMB 8255 / S1) protein is GTPase Obg.